The chain runs to 463 residues: Methionine aminopeptidase 2-2 (463 aa).

Residues 1–107 are disordered; it reads MGAKTFEGGD…VPLSQLFPDG (107 aa). The segment covering 37–53 has biased composition (acidic residues); it reads EDGDGEFGTDDDDDGDG. Basic residues predominate over residues 69 to 83; the sequence is PKKRKRSKKKKSNKK. Substrate is bound at residue H215. The a divalent metal cation site is built by D236, D247, and H316. Position 324 (H324) interacts with substrate. A divalent metal cation contacts are provided by E349 and E444.

The protein belongs to the peptidase M24A family. Methionine aminopeptidase eukaryotic type 2 subfamily. Co(2+) serves as cofactor. Requires Zn(2+) as cofactor. Mn(2+) is required as a cofactor. The cofactor is Fe(2+).

The protein localises to the cytoplasm. The catalysed reaction is Release of N-terminal amino acids, preferentially methionine, from peptides and arylamides.. Cotranslationally removes the N-terminal methionine from nascent proteins. The N-terminal methionine is often cleaved when the second residue in the primary sequence is small and uncharged (Met-Ala-, Cys, Gly, Pro, Ser, Thr, or Val). The protein is Methionine aminopeptidase 2-2 of Talaromyces marneffei (strain ATCC 18224 / CBS 334.59 / QM 7333) (Penicillium marneffei).